Here is a 214-residue protein sequence, read N- to C-terminus: Guanylate kinase (214 aa).

Positions 12–191 (GLMLVMSSPS…SIAAVQAILA (180 aa)) constitute a Guanylate kinase-like domain. ATP is bound at residue 19–26 (SPSGAGKT).

Belongs to the guanylate kinase family.

The protein resides in the cytoplasm. The enzyme catalyses GMP + ATP = GDP + ADP. In terms of biological role, essential for recycling GMP and indirectly, cGMP. The chain is Guanylate kinase from Paramagnetospirillum magneticum (strain ATCC 700264 / AMB-1) (Magnetospirillum magneticum).